Reading from the N-terminus, the 743-residue chain is Cap-specific mRNA (nucleoside-2'-O-)-methyltransferase 2 (743 aa).

One can recognise an Adrift-type SAM-dependent 2'-O-MTase domain in the interval 113–326 (ELCTQAWAKF…LYIVCLDYQA (214 aa)). K121 is an active-site residue. Positions 152, 171, and 239 each coordinate S-adenosyl-L-methionine. The active site involves D239. The active-site Proton acceptor is K279.

The protein localises to the nucleus. It localises to the cytoplasm. The enzyme catalyses a 5'-end (N(7)-methyl 5'-triphosphoguanosine)-(2'-O-methyl-ribonucleoside)-(ribonucleotide) in mRNA + S-adenosyl-L-methionine = a 5'-end (N(7)-methyl 5'-triphosphoguanosine)-(2'-O-methyl-ribonucleoside)-(2'-O-methyl-ribonucleotide) in mRNA + S-adenosyl-L-homocysteine + H(+). Its function is as follows. S-adenosyl-L-methionine-dependent methyltransferase that mediates mRNA cap2 2'-O-ribose methylation to the 5'-cap structure of mRNAs. Methylates the ribose of the second nucleotide of a m(7)GpppG-capped mRNA and small nuclear RNA (snRNA) (cap0) to produce m(7)GpppRmpNm (cap2). In Danio rerio (Zebrafish), this protein is Cap-specific mRNA (nucleoside-2'-O-)-methyltransferase 2 (cmtr2).